An 836-amino-acid chain; its full sequence is DNA gyrase subunit A (836 aa).

Residues 46-510 enclose the Topo IIA-type catalytic domain; it reads LPDARDGLKP…ISEEIDDESL (465 aa). Catalysis depends on Tyr-134, which acts as the O-(5'-phospho-DNA)-tyrosine intermediate. A GyrA-box motif is present at residues 537-543; that stretch reads QHRGGVG.

Belongs to the type II topoisomerase GyrA/ParC subunit family. In terms of assembly, heterotetramer, composed of two GyrA and two GyrB chains. In the heterotetramer, GyrA contains the active site tyrosine that forms a transient covalent intermediate with DNA, while GyrB binds cofactors and catalyzes ATP hydrolysis.

The protein resides in the cytoplasm. The catalysed reaction is ATP-dependent breakage, passage and rejoining of double-stranded DNA.. Its function is as follows. A type II topoisomerase that negatively supercoils closed circular double-stranded (ds) DNA in an ATP-dependent manner to modulate DNA topology and maintain chromosomes in an underwound state. Negative supercoiling favors strand separation, and DNA replication, transcription, recombination and repair, all of which involve strand separation. Also able to catalyze the interconversion of other topological isomers of dsDNA rings, including catenanes and knotted rings. Type II topoisomerases break and join 2 DNA strands simultaneously in an ATP-dependent manner. The chain is DNA gyrase subunit A from Mycoplasma genitalium (strain ATCC 33530 / DSM 19775 / NCTC 10195 / G37) (Mycoplasmoides genitalium).